Here is a 144-residue protein sequence, read N- to C-terminus: TSC22 domain family protein 1 (144 aa).

The leucine-zipper stretch occupies residues 77-98 (LKEQIKELIEKNSQLEQENNLL). The interval 109–144 (QFQAQLQTGSPPATTQPQGTTQPPAQPASQGSGPTA) is disordered. Residues 115 to 144 (QTGSPPATTQPQGTTQPPAQPASQGSGPTA) show a composition bias toward low complexity.

The protein belongs to the TSC-22/Dip/Bun family. In terms of assembly, forms homodimers. Forms a heterodimer with TSC22D4/THG1. Interacts with histone H1-2. Interacts with GNL3.

The protein localises to the cytoplasm. Its subcellular location is the nucleus. Functionally, transcriptional repressor. Plays a role in the repression of hematopoietic precursor cell growth. Promotes IL2 deprivation-induced apoptosis in T-lymphocytes, via repression of TSC22D3/GILZ transcription and activation of the caspase cascade. Positively regulates cell death in response to TGFB3 during mammary gland involution. The protein is TSC22 domain family protein 1 of Bos taurus (Bovine).